Here is a 280-residue protein sequence, read N- to C-terminus: UDP-3-O-acyl-N-acetylglucosamine deacetylase (280 aa).

3 residues coordinate Zn(2+): H77, H238, and D242. The active-site Proton donor is H265.

The protein belongs to the LpxC family. Zn(2+) is required as a cofactor.

The enzyme catalyses a UDP-3-O-[(3R)-3-hydroxyacyl]-N-acetyl-alpha-D-glucosamine + H2O = a UDP-3-O-[(3R)-3-hydroxyacyl]-alpha-D-glucosamine + acetate. Its pathway is glycolipid biosynthesis; lipid IV(A) biosynthesis; lipid IV(A) from (3R)-3-hydroxytetradecanoyl-[acyl-carrier-protein] and UDP-N-acetyl-alpha-D-glucosamine: step 2/6. Functionally, catalyzes the hydrolysis of UDP-3-O-myristoyl-N-acetylglucosamine to form UDP-3-O-myristoylglucosamine and acetate, the committed step in lipid A biosynthesis. In Trichormus variabilis (strain ATCC 29413 / PCC 7937) (Anabaena variabilis), this protein is UDP-3-O-acyl-N-acetylglucosamine deacetylase.